The sequence spans 441 residues: Ribulose bisphosphate carboxylase large chain (441 aa).

The substrate site is built by Asn89 and Thr139. Lys141 (proton acceptor) is an active-site residue. Position 143 (Lys143) interacts with substrate. Residues Lys167, Asp169, and Glu170 each coordinate Mg(2+). Lys167 carries the N6-carboxylysine modification. The active-site Proton acceptor is His260. Residues Arg261, His293, and Ser345 each coordinate substrate.

This sequence belongs to the RuBisCO large chain family. Type I subfamily. As to quaternary structure, heterohexadecamer of 8 large chains and 8 small chains; disulfide-linked. The disulfide link is formed within the large subunit homodimers. The cofactor is Mg(2+). The disulfide bond which can form in the large chain dimeric partners within the hexadecamer appears to be associated with oxidative stress and protein turnover.

It localises to the plastid. Its subcellular location is the chloroplast. It carries out the reaction 2 (2R)-3-phosphoglycerate + 2 H(+) = D-ribulose 1,5-bisphosphate + CO2 + H2O. The catalysed reaction is D-ribulose 1,5-bisphosphate + O2 = 2-phosphoglycolate + (2R)-3-phosphoglycerate + 2 H(+). Its function is as follows. RuBisCO catalyzes two reactions: the carboxylation of D-ribulose 1,5-bisphosphate, the primary event in carbon dioxide fixation, as well as the oxidative fragmentation of the pentose substrate in the photorespiration process. Both reactions occur simultaneously and in competition at the same active site. This chain is Ribulose bisphosphate carboxylase large chain, found in Fouquieria splendens (Ocotillo).